The sequence spans 1005 residues: Beta-galactosidase (1005 aa).

Catalysis depends on Glu-455, which acts as the Proton donor. Glu-526 (nucleophile) is an active-site residue.

It belongs to the glycosyl hydrolase 2 family.

The enzyme catalyses Hydrolysis of terminal non-reducing beta-D-galactose residues in beta-D-galactosides.. The chain is Beta-galactosidase (lacZ) from Actinobacillus pleuropneumoniae (Haemophilus pleuropneumoniae).